A 202-amino-acid chain; its full sequence is Protein TIFY 11g (202 aa).

The span at 1–11 shows a compositional bias: gly residues; that stretch reads MDAVGAAGGGA. Residues 1-31 are disordered; sequence MDAVGAAGGGAMLPAAARRGQPPQPPCMTTA. Residues 12 to 21 are compositionally biased toward low complexity; it reads MLPAAARRGQ. The 36-residue stretch at 101–136 folds into the Tify domain; that stretch reads ATAPTAPLTIVYGGQVLVFEHYTAEAAEKLVQRTQH. Residues 185–200 carry the Jas motif; sequence PIARKASLQRFLQKRK. Positions 187 to 194 match the Nuclear localization signal motif; the sequence is ARKASLQR.

It belongs to the TIFY/JAZ family. Ubiquitinated. Targeted for degradation by the SCF(COI1) E3 ubiquitin ligase-proteasome pathway during jasmonate signaling.

The protein localises to the nucleus. Functionally, repressor of jasmonate responses. The chain is Protein TIFY 11g from Oryza sativa subsp. japonica (Rice).